The sequence spans 98 residues: HssA/B-like protein 33 (98 aa).

Disordered stretches follow at residues M1–S29 and A60–C98. Over residues A60–G72 the composition is skewed to gly residues. Positions P73–G88 are enriched in basic residues. Over residues G89–C98 the composition is skewed to gly residues.

This sequence belongs to the hssA/B family.

The protein is HssA/B-like protein 33 (hssl33) of Dictyostelium discoideum (Social amoeba).